The chain runs to 1485 residues: Chromosome partition protein MukB (1485 aa).

34-41 (GGNGAGKS) contributes to the ATP binding site. Coiled coils occupy residues 337–480 (LNLV…QAYQ) and 509–605 (QHLA…PVWL). The interval 666–783 (PSGAEDARLI…EVPLFGRAAR (118 aa)) is flexible hinge. 2 coiled-coil regions span residues 835 to 915 (EAEI…IQQH) and 977 to 1116 (GMLT…AKAG).

Belongs to the SMC family. MukB subfamily. Homodimerization via its hinge domain. Binds to DNA via its C-terminal region. Interacts, and probably forms a ternary complex, with MukE and MukF via its C-terminal region. The complex formation is stimulated by calcium or magnesium. Interacts with tubulin-related protein FtsZ.

Its subcellular location is the cytoplasm. It is found in the nucleoid. Its function is as follows. Plays a central role in chromosome condensation, segregation and cell cycle progression. Functions as a homodimer, which is essential for chromosome partition. Involved in negative DNA supercoiling in vivo, and by this means organize and compact chromosomes. May achieve or facilitate chromosome segregation by condensation DNA from both sides of a centrally located replisome during cell division. This chain is Chromosome partition protein MukB, found in Yersinia pseudotuberculosis serotype O:3 (strain YPIII).